The following is a 200-amino-acid chain: Large ribosomal subunit protein uL4 (200 aa).

Residues 43 to 70 form a disordered region; the sequence is RAQKTRAEVSGSGKKPWRQKGTGRARSG.

Belongs to the universal ribosomal protein uL4 family. As to quaternary structure, part of the 50S ribosomal subunit.

Its function is as follows. One of the primary rRNA binding proteins, this protein initially binds near the 5'-end of the 23S rRNA. It is important during the early stages of 50S assembly. It makes multiple contacts with different domains of the 23S rRNA in the assembled 50S subunit and ribosome. Forms part of the polypeptide exit tunnel. The chain is Large ribosomal subunit protein uL4 from Glaesserella parasuis serovar 5 (strain SH0165) (Haemophilus parasuis).